The following is a 635-amino-acid chain: Biosynthetic arginine decarboxylase (635 aa).

Residue K101 is modified to N6-(pyridoxal phosphate)lysine. 284–294 provides a ligand contact to substrate; that stretch reads VDVGGGLGVDY.

The protein belongs to the Orn/Lys/Arg decarboxylase class-II family. SpeA subfamily. Mg(2+) is required as a cofactor. Requires pyridoxal 5'-phosphate as cofactor.

The catalysed reaction is L-arginine + H(+) = agmatine + CO2. It functions in the pathway amine and polyamine biosynthesis; agmatine biosynthesis; agmatine from L-arginine: step 1/1. Its function is as follows. Catalyzes the biosynthesis of agmatine from arginine. The polypeptide is Biosynthetic arginine decarboxylase (Tolumonas auensis (strain DSM 9187 / NBRC 110442 / TA 4)).